A 259-amino-acid chain; its full sequence is ATP synthase subunit a (259 aa).

5 helical membrane passes run 29–49 (TVNI…IWIF), 90–110 (IAPL…MDLI), 134–154 (DVNI…IYSI), 208–228 (LVFI…LSVP), and 230–250 (ALFH…LTIV).

Belongs to the ATPase A chain family. As to quaternary structure, F-type ATPases have 2 components, CF(1) - the catalytic core - and CF(0) - the membrane proton channel. CF(1) has five subunits: alpha(3), beta(3), gamma(1), delta(1), epsilon(1). CF(0) has three main subunits: a(1), b(2) and c(9-12). The alpha and beta chains form an alternating ring which encloses part of the gamma chain. CF(1) is attached to CF(0) by a central stalk formed by the gamma and epsilon chains, while a peripheral stalk is formed by the delta and b chains.

It localises to the cell inner membrane. In terms of biological role, key component of the proton channel; it plays a direct role in the translocation of protons across the membrane. This is ATP synthase subunit a from Aeromonas salmonicida (strain A449).